The sequence spans 100 residues: UPF0213 protein FN1575 (100 aa).

Positions 1-77 constitute a GIY-YIG domain; the sequence is MAYYLYMLRC…KYIKKKKENI (77 aa).

It belongs to the UPF0213 family.

In Fusobacterium nucleatum subsp. nucleatum (strain ATCC 25586 / DSM 15643 / BCRC 10681 / CIP 101130 / JCM 8532 / KCTC 2640 / LMG 13131 / VPI 4355), this protein is UPF0213 protein FN1575.